A 556-amino-acid polypeptide reads, in one-letter code: Small ribosomal subunit protein bS1 (556 aa).

S1 motif domains lie at 35–105 (TIKE…ISQQ), 120–183 (NAII…ISRK), 204–272 (TEPV…LSIK), 289–359 (GYAI…VSLK), 377–444 (DVLE…LSAK), and 461–525 (DSVI…ASVH).

The protein belongs to the bacterial ribosomal protein bS1 family.

Binds mRNA; thus facilitating recognition of the initiation point. It is needed to translate mRNA with a short Shine-Dalgarno (SD) purine-rich sequence. The protein is Small ribosomal subunit protein bS1 (rpsA) of Helicobacter pylori (strain ATCC 700392 / 26695) (Campylobacter pylori).